Here is a 269-residue protein sequence, read N- to C-terminus: Large ribosomal subunit protein uL3m (269 aa).

A mitochondrion-targeting transit peptide spans 1 to 19 (MSKFLQGSIFSISKLHVRY).

Belongs to the universal ribosomal protein uL3 family. Component of the mitochondrial large ribosomal subunit (mt-LSU). Mature yeast 74S mitochondrial ribosomes consist of a small (37S) and a large (54S) subunit. The 37S small subunit contains a 15S ribosomal RNA (15S mt-rRNA) and 34 different proteins. The 54S large subunit contains a 21S rRNA (21S mt-rRNA) and 46 different proteins.

The protein localises to the mitochondrion. Component of the mitochondrial ribosome (mitoribosome), a dedicated translation machinery responsible for the synthesis of mitochondrial genome-encoded proteins, including at least some of the essential transmembrane subunits of the mitochondrial respiratory chain. The mitoribosomes are attached to the mitochondrial inner membrane and translation products are cotranslationally integrated into the membrane. This Saccharomyces cerevisiae (strain ATCC 204508 / S288c) (Baker's yeast) protein is Large ribosomal subunit protein uL3m (MRPL9).